The primary structure comprises 465 residues: tRNA (guanine(37)-N(1))-methyltransferase (465 aa).

The transit peptide at Met1 to Ala20 directs the protein to the mitochondrion. Residues His238 and Asp304 to Gly305 contribute to the S-adenosyl-L-methionine site. The disordered stretch occupies residues Ala326–Val345. S-adenosyl-L-methionine is bound at residue Asn359.

It belongs to the class I-like SAM-binding methyltransferase superfamily. TRM5/TYW2 family. As to quaternary structure, monomer.

It localises to the mitochondrion matrix. The protein resides in the nucleus. The protein localises to the cytoplasm. It carries out the reaction guanosine(37) in tRNA + S-adenosyl-L-methionine = N(1)-methylguanosine(37) in tRNA + S-adenosyl-L-homocysteine + H(+). Functionally, specifically methylates the N1 position of guanosine-37 in various cytoplasmic and mitochondrial tRNAs. Methylation is not dependent on the nature of the nucleoside 5' of the target nucleoside. This is the first step in the biosynthesis of wybutosine (yW), a modified base adjacent to the anticodon of tRNAs and required for accurate decoding. The polypeptide is tRNA (guanine(37)-N(1))-methyltransferase (Fusarium vanettenii (strain ATCC MYA-4622 / CBS 123669 / FGSC 9596 / NRRL 45880 / 77-13-4) (Fusarium solani subsp. pisi)).